Reading from the N-terminus, the 405-residue chain is Opine dehydrogenase (405 aa).

The protein belongs to the lysopine/nopaline/octopine/opine/vitopine dehydrogenases family.

The protein is Opine dehydrogenase of Haliotis discus hannai (Japanese abalone).